Here is a 78-residue protein sequence, read N- to C-terminus: Large ribosomal subunit protein bL28 (78 aa).

This sequence belongs to the bacterial ribosomal protein bL28 family.

This chain is Large ribosomal subunit protein bL28, found in Rippkaea orientalis (strain PCC 8801 / RF-1) (Cyanothece sp. (strain PCC 8801)).